Consider the following 633-residue polypeptide: DNA repair protein XRCC1 (633 aa).

Residue Ser-140 is modified to Phosphoserine. Lys-176 is covalently cross-linked (Glycyl lysine isopeptide (Lys-Gly) (interchain with G-Cter in SUMO1); alternate). Lys-176 participates in a covalent cross-link: Glycyl lysine isopeptide (Lys-Gly) (interchain with G-Cter in SUMO2); alternate. Thr-198 carries the phosphothreonine modification. Ser-199 is subject to Phosphoserine. Thr-202 carries the phosphothreonine modification. Ser-204, Ser-226, and Ser-241 each carry phosphoserine. Residues 221–231 show a composition bias toward low complexity; the sequence is AASSASPVSRA. A disordered region spans residues 221-313; the sequence is AASSASPVSR…TEPRRPRAGP (93 aa). The span at 240–257 shows a compositional bias: basic and acidic residues; the sequence is ESPKGKRKLDLNQEEKKT. Phosphothreonine is present on Thr-257. Residues Ser-259 and Ser-266 each carry the phosphoserine modification. The segment covering 277 to 291 has biased composition (low complexity); sequence APTRTPATAPVPARA. Position 281 is a phosphothreonine (Thr-281). Positions 299-313 are enriched in basic and acidic residues; the sequence is PRGEGTEPRRPRAGP. A BRCT 1 domain is found at 315–403; that stretch reads ELGKILQGVV…RRLPSQRYLM (89 aa). Ser-371 carries the post-translational modification Phosphoserine; by PRKDC. Disordered stretches follow at residues 400-462, 471-490, and 498-536; these read RYLM…AASP, EGVQSEGQDNGAEDSGDTED, and QKEHRLPPGQEENGEDPYAGSTDENTDSEEHQEPPDLPV. Ser-408, Ser-409, Ser-410, and Ser-421 each carry phosphoserine. Residues 427–443 are compositionally biased toward low complexity; sequence KLPQKQPQTKTKPTQAA. Residues Ser-446 and Ser-447 each carry the phosphoserine modification. A phosphothreonine mark is found at Thr-453 and Thr-457. Ser-461 and Ser-485 each carry phosphoserine. The segment covering 481 to 490 has biased composition (acidic residues); that stretch reads GAEDSGDTED. The residue at position 488 (Thr-488) is a Phosphothreonine. Phosphoserine is present on Ser-518. A phosphothreonine mark is found at Thr-519 and Thr-523. Residues 538-629 form the BRCT 2 domain; the sequence is ELPDFFQGKH…KLLPHQLYGV (92 aa).

In terms of assembly, homodimer. Interacts with polynucleotide kinase (PNK), DNA polymerase-beta (POLB) and DNA ligase III (LIG3). Interacts with APTX and APLF. Interacts with APEX1; the interaction is induced by SIRT1 and increases with the acetylated form of APEX1. Interacts with (poly-ADP-ribosylated) PARP1. Post-translationally, phosphorylation of Ser-371 causes dimer dissociation. Phosphorylation by CK2 promotes interaction with APTX and APLF. Sumoylated. Expressed in fibroblasts, retinal pigmented epithelial cells and lymphoblastoid cells (at protein level).

The protein localises to the nucleus. It is found in the chromosome. Scaffold protein involved in DNA single-strand break repair by mediating the assembly of DNA break repair protein complexes. Negatively regulates ADP-ribosyltransferase activity of PARP1 during base-excision repair in order to prevent excessive PARP1 activity. Recognizes and binds poly-ADP-ribose chains: specifically binds auto-poly-ADP-ribosylated PARP1, limiting its activity. This Homo sapiens (Human) protein is DNA repair protein XRCC1.